The chain runs to 260 residues: MPNLLEKTRKITSILQRSVDSLETELPYNTMASRLADIIDCNACIINGGGSLLGYAMKYKTNTDRVEEFFETRQFPDAYVKAASRVYDTEANLSVENELTIFPVESKDIYPDGLTTIAPIYGGGMRLGTLIIWRNDNEFSDDDLVLVEISSTVVGIQLLNLQTENLEETIRKQTAVNMAINTLSYSEMKAVAAILSELDGNEGRLTASVIADRIGITRSVIVNALRKLESAGIIESRSLGMKGTYLKVINEGIFDKLKEF.

Positions 1 to 159 (MPNLLEKTRK…SSTVVGIQLL (159 aa)) are GAF domain. The H-T-H motif DNA-binding region spans 207-226 (ASVIADRIGITRSVIVNALR).

This sequence belongs to the CodY family.

It is found in the cytoplasm. Functionally, DNA-binding global transcriptional regulator which is involved in the adaptive response to starvation and acts by directly or indirectly controlling the expression of numerous genes in response to nutrient availability. During rapid exponential growth, CodY is highly active and represses genes whose products allow adaptation to nutrient depletion. The protein is Global transcriptional regulator CodY of Streptococcus equi subsp. zooepidemicus (strain H70).